The primary structure comprises 475 residues: ADP-ribosyltransferase toxin AexT (475 aa).

Positions 93 to 226 constitute a Bacterial Rho-GAP domain; the sequence is VSPEDLQRLM…LQRAVKAEVA (134 aa). Positions 260 to 436 constitute a TR mART core domain; that stretch reads EGLQEQFGLE…RVLEEASLGE (177 aa). Catalysis depends on residues Arg340, Ser364, and Glu403.

Its subcellular location is the secreted. Its function is as follows. Directly involved in the toxicity for RTG-2 (rainbow trout gonad) fish cells. The polypeptide is ADP-ribosyltransferase toxin AexT (aexT) (Aeromonas salmonicida).